We begin with the raw amino-acid sequence, 43 residues long: uncharacterized protein (43 aa).

This is an uncharacterized protein from Escherichia coli (Bacteriophage T4).